A 463-amino-acid chain; its full sequence is Chaperone SurA (463 aa).

The N-terminal stretch at 1–25 is a signal peptide; that stretch reads MTRYFSIVLSLLLAVSCVFLPVASA. 2 consecutive PpiC domains span residues 175–277 and 291–390; these read GAQY…KLVE and ATEY…QRLG. Residues 439-463 are disordered; that stretch reads ADDHHTPSAAVTPATGAVLPAATKH.

The protein resides in the periplasm. It catalyses the reaction [protein]-peptidylproline (omega=180) = [protein]-peptidylproline (omega=0). In terms of biological role, chaperone involved in the correct folding and assembly of outer membrane proteins. Recognizes specific patterns of aromatic residues and the orientation of their side chains, which are found more frequently in integral outer membrane proteins. May act in both early periplasmic and late outer membrane-associated steps of protein maturation. This chain is Chaperone SurA, found in Xylella fastidiosa (strain Temecula1 / ATCC 700964).